A 1030-amino-acid polypeptide reads, in one-letter code: Translation initiation factor IF-2 (1030 aa).

Low complexity-rich tracts occupy residues 56–69 (APSE…AADS) and 111–132 (PNIV…APIK). Disordered regions lie at residues 56 to 361 (APSE…KRRQ) and 394 to 434 (SKPK…REQK). Residues 134 to 144 (ARPEKSAEKPE) show a composition bias toward basic and acidic residues. Over residues 154-164 (AASAEPAKSPS) the composition is skewed to low complexity. The segment covering 188–206 (LLRKPEIVRRSEAKPERTS) has biased composition (basic and acidic residues). The span at 259–273 (VAASASGVPAAASRV) shows a compositional bias: low complexity. The region spanning 522 to 695 (TRPPVVTVMG…LLVTEVEELV (174 aa)) is the tr-type G domain. Residues 531–538 (GHVDHGKT) form a G1 region. 531–538 (GHVDHGKT) contributes to the GTP binding site. Positions 556-560 (GITQH) are G2. Residues 581 to 584 (DTPG) form a G3 region. GTP-binding positions include 581-585 (DTPGH) and 635-638 (NKCD). Positions 635 to 638 (NKCD) are G4. Residues 671-673 (SAI) form a G5 region.

Belongs to the TRAFAC class translation factor GTPase superfamily. Classic translation factor GTPase family. IF-2 subfamily.

Its subcellular location is the cytoplasm. One of the essential components for the initiation of protein synthesis. Protects formylmethionyl-tRNA from spontaneous hydrolysis and promotes its binding to the 30S ribosomal subunits. Also involved in the hydrolysis of GTP during the formation of the 70S ribosomal complex. This Synechococcus elongatus (strain ATCC 33912 / PCC 7942 / FACHB-805) (Anacystis nidulans R2) protein is Translation initiation factor IF-2.